A 299-amino-acid polypeptide reads, in one-letter code: Taste receptor type 2 member 50 (299 aa).

Residue M1 is a topological domain, extracellular. A helical membrane pass occupies residues 2–22 (ITFLYIFFSILILVLFVLGNF). At 23-55 (ANGFIALVNFIDWVKRKKISSADQILTALAVSR) the chain is on the cytoplasmic side. A helical transmembrane segment spans residues 56 to 76 (IGLLWALLLNWYLTVLNPAFY). At 77 to 87 (SVELRITSYNA) the chain is on the extracellular side. The helical transmembrane segment at 88–108 (WVVTNHFSMWLAASLSIFYLL) threads the bilayer. Topologically, residues 109–126 (KIANFSNLIFLHLKRRVR) are cytoplasmic. The helical transmembrane segment at 127–147 (SVILVILLGTLIFLVCHLLVA) threads the bilayer. Residues 148 to 181 (NMDESMWAEEYEGNMTGKMKLRNTVHLSYLTVTT) are Extracellular-facing. N161 carries N-linked (GlcNAc...) asparagine glycosylation. Residues 182–202 (LWSFIPFTLSLISFLMLICSL) traverse the membrane as a helical segment. At 203–229 (CKHLKKMQLHGEGSQDLSTKVHIKALQ) the chain is on the cytoplasmic side. A helical transmembrane segment spans residues 230–250 (TLISFLLLCAIFFLFLIISVW). The Extracellular portion of the chain corresponds to 251–259 (SPRRLQNDP). Residues 260–280 (VVMVSKAVGNIYLAFDSFILI) traverse the membrane as a helical segment. Residues 281–299 (WRTKKLKHTFLLILCQIRC) are Cytoplasmic-facing.

Belongs to the G-protein coupled receptor T2R family.

It is found in the membrane. Its function is as follows. Receptor that may play a role in the perception of bitterness and is gustducin-linked. May play a role in sensing the chemical composition of the gastrointestinal content. The activity of this receptor may stimulate alpha gustducin, mediate PLC-beta-2 activation and lead to the gating of TRPM5. The sequence is that of Taste receptor type 2 member 50 (TAS2R50) from Gorilla gorilla gorilla (Western lowland gorilla).